Here is a 254-residue protein sequence, read N- to C-terminus: Hydroxyacylglutathione hydrolase (254 aa).

His-53, His-55, Asp-57, His-58, His-111, Asp-128, and His-166 together coordinate Zn(2+).

The protein belongs to the metallo-beta-lactamase superfamily. Glyoxalase II family. As to quaternary structure, monomer. Requires Zn(2+) as cofactor.

It catalyses the reaction an S-(2-hydroxyacyl)glutathione + H2O = a 2-hydroxy carboxylate + glutathione + H(+). Its pathway is secondary metabolite metabolism; methylglyoxal degradation; (R)-lactate from methylglyoxal: step 2/2. In terms of biological role, thiolesterase that catalyzes the hydrolysis of S-D-lactoyl-glutathione to form glutathione and D-lactic acid. The chain is Hydroxyacylglutathione hydrolase from Aeromonas hydrophila subsp. hydrophila (strain ATCC 7966 / DSM 30187 / BCRC 13018 / CCUG 14551 / JCM 1027 / KCTC 2358 / NCIMB 9240 / NCTC 8049).